Reading from the N-terminus, the 953-residue chain is Ubiquitin carboxyl-terminal hydrolase CYLD (953 aa).

Positions 106–590 are interaction with TRIP; the sequence is CEERFSLFKN…FEIMIGKKKG (485 aa). 2 consecutive CAP-Gly domains span residues 153–198 and 253–286; these read LAER…VFVA and DVLPGKESLGYFVGVDMDNPIGNWDGRFDGVQLC. Disordered stretches follow at residues 313-349 and 384-410; these read PPKLAFMSRGVGDKGSFSHNKPKATGSTSDPGTRNRS and SLTEIPPDFGHASPPLQPPSMNSLSSE. Polar residues predominate over residues 337–346; that stretch reads TGSTSDPGTR. Ser-384, Ser-415, and Ser-419 each carry phosphoserine. The interaction with TRAF2 stretch occupies residues 391–466; the sequence is DFGHASPPLQ…LAVSSGNSHG (76 aa). Positions 467-681 are interaction with IKBKG/NEMO; sequence LEVGSLAEVK…FTSEEKDPEE (215 aa). Residues 489–532 enclose the CAP-Gly 3 domain; that stretch reads GQPPGLNEVLAGLELEDECAGCTDGTFRGTRYFTCALKKALFVK. The 359-residue stretch at 589–947 folds into the USP domain; sequence KGIQGHYNSC…DAYMCMYQSP (359 aa). Cys-598 functions as the Nucleophile in the catalytic mechanism. Residues 778–830 are B-box; the sequence is LEDTPRQCRICGGLAMYECRECYDDPDISAGKIKQFCKTCNAQVHLHPKRLNH. Residues Cys-785, Cys-788, Cys-796, Cys-799, Cys-814, Cys-817, His-822, and His-830 each contribute to the Zn(2+) site. Catalysis depends on His-868, which acts as the Proton acceptor.

It belongs to the peptidase C19 family. As to quaternary structure, interacts (via CAP-Gly domain) with IKBKG/NEMO (via proline-rich C-terminal region). Interacts with TRAF2 and TRIP. Interacts with PLK1, DVL1, DVL3, MAVS, TBK1, IKKE and RIGI. Interacts (via CAP-Gly domain) with microtubules. Interacts with HDAC6 and BCL3. Interacts with MAP3K7. Identified in a complex with TRAF6 and SQSTM1. Interacts with OPTN and SQSTM1. Interacts with CEP350. Interacts with RNF31; the interaction is indirect and is mediated via SPATA2. Interacts with SPATA2 (via the PUB domain); the interaction is direct and recruits CYLD to the LUBAC complex, thereby regulating TNF-alpha-induced necroptosis. In terms of processing, phosphorylated on several serine residues by IKKA and/or IKKB in response to immune stimuli. Phosphorylation requires IKBKG. Phosphorylation abolishes TRAF2 deubiquitination, interferes with the activation of Jun kinases, and strongly reduces CD40-dependent gene activation by NF-kappa-B. Post-translationally, ubiquitinated. Polyubiquitinated in hepatocytes treated with palmitic acid. Ubiquitination is mediated by E3 ligase TRIM47 and leads to proteasomal degradation.

The protein resides in the cytoplasm. The protein localises to the perinuclear region. It is found in the cytoskeleton. It localises to the cell membrane. Its subcellular location is the microtubule organizing center. The protein resides in the centrosome. The protein localises to the spindle. It is found in the cilium basal body. The catalysed reaction is Thiol-dependent hydrolysis of ester, thioester, amide, peptide and isopeptide bonds formed by the C-terminal Gly of ubiquitin (a 76-residue protein attached to proteins as an intracellular targeting signal).. In terms of biological role, deubiquitinase that specifically cleaves 'Lys-63'- and linear 'Met-1'-linked polyubiquitin chains and is involved in NF-kappa-B activation and TNF-alpha-induced necroptosis. Negatively regulates NF-kappa-B activation by deubiquitinating upstream signaling factors. Contributes to the regulation of cell survival, proliferation and differentiation via its effects on NF-kappa-B activation. Negative regulator of Wnt signaling. Inhibits HDAC6 and thereby promotes acetylation of alpha-tubulin and stabilization of microtubules. Plays a role in the regulation of microtubule dynamics, and thereby contributes to the regulation of cell proliferation, cell polarization, cell migration, and angiogenesis. Required for normal cell cycle progress and normal cytokinesis. Inhibits nuclear translocation of NF-kappa-B. Plays a role in the regulation of inflammation and the innate immune response, via its effects on NF-kappa-B activation. Dispensable for the maturation of intrathymic natural killer cells, but required for the continued survival of immature natural killer cells. Negatively regulates TNFRSF11A signaling and osteoclastogenesis. Involved in the regulation of ciliogenesis, allowing ciliary basal bodies to migrate and dock to the plasma membrane; this process does not depend on NF-kappa-B activation. Ability to remove linear ('Met-1'-linked) polyubiquitin chains regulates innate immunity and TNF-alpha-induced necroptosis: recruited to the LUBAC complex via interaction with SPATA2 and restricts linear polyubiquitin formation on target proteins. Regulates innate immunity by restricting linear polyubiquitin formation on RIPK2 in response to NOD2 stimulation. Involved in TNF-alpha-induced necroptosis by removing linear ('Met-1'-linked) polyubiquitin chains from RIPK1, thereby regulating the kinase activity of RIPK1. Negatively regulates intestinal inflammation by removing 'Lys-63' linked polyubiquitin chain of NLRP6, thereby reducing the interaction between NLRP6 and PYCARD/ASC and formation of the NLRP6 inflammasome. Does not catalyze deubiquitination of heterotypic 'Lys-63'-/'Lys-48'-linked branched ubiquitin chains. Removes 'Lys-63' linked polyubiquitin chain of MAP3K7, which inhibits phosphorylation and blocks downstream activation of the JNK-p38 kinase cascades. Also removes 'Lys-63'-linked polyubiquitin chains of MAP3K1 and MA3P3K3, which inhibit their interaction with MAP2K1 and MAP2K2. The polypeptide is Ubiquitin carboxyl-terminal hydrolase CYLD (CYLD) (Bos taurus (Bovine)).